The primary structure comprises 186 residues: ATP synthase subunit b' (186 aa).

Residues 39 to 59 form a helical membrane-spanning segment; the sequence is IFWLLLALGAIYWLLKNIAIP.

The protein belongs to the ATPase B chain family. As to quaternary structure, F-type ATPases have 2 components, F(1) - the catalytic core - and F(0) - the membrane proton channel. F(1) has five subunits: alpha(3), beta(3), gamma(1), delta(1), epsilon(1). F(0) has four main subunits: a(1), b(1), b'(1) and c(10-14). The alpha and beta chains form an alternating ring which encloses part of the gamma chain. F(1) is attached to F(0) by a central stalk formed by the gamma and epsilon chains, while a peripheral stalk is formed by the delta, b and b' chains.

The protein localises to the cellular chromatophore membrane. F(1)F(0) ATP synthase produces ATP from ADP in the presence of a proton or sodium gradient. F-type ATPases consist of two structural domains, F(1) containing the extramembraneous catalytic core and F(0) containing the membrane proton channel, linked together by a central stalk and a peripheral stalk. During catalysis, ATP synthesis in the catalytic domain of F(1) is coupled via a rotary mechanism of the central stalk subunits to proton translocation. In terms of biological role, component of the F(0) channel, it forms part of the peripheral stalk, linking F(1) to F(0). The b'-subunit is a diverged and duplicated form of b found in plants and photosynthetic bacteria. This Rhodobacter capsulatus (Rhodopseudomonas capsulata) protein is ATP synthase subunit b'.